A 184-amino-acid polypeptide reads, in one-letter code: uncharacterized protein (184 aa).

The disordered stretch occupies residues 1–24 (MGISDQINSNLSSQSPFTVSTNPS).

This is an uncharacterized protein from Dictyostelium discoideum (Social amoeba).